The sequence spans 1007 residues: Lysosomal alpha-mannosidase (1007 aa).

Composition is skewed to low complexity over residues 1-10 (MGADARPLGV) and 19-28 (AARPGTSSRA). The tract at residues 1–30 (MGADARPLGVRAGGGGRGAARPGTSSRALP) is disordered. The N-terminal stretch at 1–50 (MGADARPLGVRAGGGGRGAARPGTSSRALPPPLPPLSFLLLLLAAPGARA) is a signal peptide. Disulfide bonds link C56–C360 and C269–C274. Zn(2+)-binding residues include H73 and D75. N-linked (GlcNAc...) asparagine glycosylation is present at N134. Residue D197 coordinates Zn(2+). D197 acts as the Nucleophile in catalysis. Residues N311, N347, and N369 are each glycosylated (N-linked (GlcNAc...) asparagine). Disulfide bonds link C414/C474 and C495/C503. H448 is a binding site for Zn(2+). 7 N-linked (GlcNAc...) asparagine glycosylation sites follow: N499, N543, N643, N649, N690, N764, and N927.

The protein belongs to the glycosyl hydrolase 38 family. Requires Zn(2+) as cofactor. Post-translationally, processed into 3 peptides of 72 kDa, 41 kDa and 12 kDa.

The protein resides in the lysosome. It carries out the reaction Hydrolysis of terminal, non-reducing alpha-D-mannose residues in alpha-D-mannosides.. Functionally, necessary for the catabolism of N-linked carbohydrates released during glycoprotein turnover. The polypeptide is Lysosomal alpha-mannosidase (MAN2B1) (Felis catus (Cat)).